The sequence spans 336 residues: F420-dependent glucose-6-phosphate dehydrogenase (336 aa).

Coenzyme F420-(gamma-Glu)n is bound at residue aspartate 39. Histidine 40 serves as the catalytic Proton donor. Coenzyme F420-(gamma-Glu)n-binding positions include threonine 76 and 107 to 108 (TG). Residue glutamate 109 is the Proton acceptor of the active site. Coenzyme F420-(gamma-Glu)n-binding positions include asparagine 112, 177-178 (GG), and 180-181 (EV). Residues threonine 195, lysine 198, lysine 259, and arginine 283 each contribute to the substrate site.

This sequence belongs to the F420-dependent glucose-6-phosphate dehydrogenase family. In terms of assembly, homodimer.

It carries out the reaction oxidized coenzyme F420-(gamma-L-Glu)(n) + D-glucose 6-phosphate + H(+) = 6-phospho-D-glucono-1,5-lactone + reduced coenzyme F420-(gamma-L-Glu)(n). Functionally, catalyzes the coenzyme F420-dependent oxidation of glucose 6-phosphate (G6P) to 6-phosphogluconolactone. Appears to have a role in resistance to oxidative stress, via its consumption of G6P that serves as a source of reducing power to combat oxidative stress in mycobacteria. This is F420-dependent glucose-6-phosphate dehydrogenase from Mycobacterium leprae (strain Br4923).